Reading from the N-terminus, the 931-residue chain is Isoleucine--tRNA ligase (931 aa).

Positions 58 to 68 (PYANGHLHCGH) match the 'HIGH' region motif. Residue Glu-559 participates in L-isoleucyl-5'-AMP binding. Positions 600 to 604 (KLSKS) match the 'KMSKS' region motif. Lys-603 provides a ligand contact to ATP. Cys-894, Cys-897, Cys-914, and Cys-917 together coordinate Zn(2+).

It belongs to the class-I aminoacyl-tRNA synthetase family. IleS type 1 subfamily. Monomer. Zn(2+) serves as cofactor.

The protein resides in the cytoplasm. It catalyses the reaction tRNA(Ile) + L-isoleucine + ATP = L-isoleucyl-tRNA(Ile) + AMP + diphosphate. Its function is as follows. Catalyzes the attachment of isoleucine to tRNA(Ile). As IleRS can inadvertently accommodate and process structurally similar amino acids such as valine, to avoid such errors it has two additional distinct tRNA(Ile)-dependent editing activities. One activity is designated as 'pretransfer' editing and involves the hydrolysis of activated Val-AMP. The other activity is designated 'posttransfer' editing and involves deacylation of mischarged Val-tRNA(Ile). The sequence is that of Isoleucine--tRNA ligase from Legionella pneumophila (strain Corby).